A 953-amino-acid chain; its full sequence is Anion exchange protein 4 (953 aa).

The disordered stretch occupies residues 20 to 41 (SEQLDGDLGPGSGLDGPSDIDN). 4 consecutive transmembrane segments (helical) span residues 385-405 (AVLYIYLATVTNAITFGGLLG), 413-433 (GVLESFLGTAVAGATFCLMAG), 470-490 (VGIWVATFCLALVATEASLLV), and 501-521 (FCALISLIFIYDAVGKMLNLI). Residues 385-953 (AVLYIYLATV…KAPEINISVN (569 aa)) are membrane (anion exchange). 2 N-linked (GlcNAc...) asparagine glycosylation sites follow: asparagine 546 and asparagine 570. 7 helical membrane-spanning segments follow: residues 594 to 614 (VPDIAFFSLLLFFTSFLCAIA), 635 to 655 (FSSVLAILLGCGLDAFLGLAT), 682 to 702 (PWWLSVAAALPALLLSILIFM), 728 to 748 (LFCVAVLMLFTSALGLPWYVS), 785 to 805 (GLVVFILTGVSIFLAPVLKFI), 807 to 827 (MPVLYGIFLYMGVAALSSMQF), and 869 to 889 (LWVIKSTPAAIVFPLMLLGLV). Residues 916 to 927 (KTIPENRPEPEH) show a composition bias toward basic and acidic residues. The disordered stretch occupies residues 916-938 (KTIPENRPEPEHLFSGNDSENSE). Residues asparagine 932 and asparagine 949 are each glycosylated (N-linked (GlcNAc...) asparagine).

Belongs to the anion exchanger (TC 2.A.31) family. Expressed in kidney and gastrointestinal tract. In kidney, it is highly expressed in the cortex, expressed at intermediate level in the outer medulla and not expressed in the inner medulla. It is expressed in the cecum, while it is absent in other segments of gastrointestinal tract. Highly expressed in the cortical collecting duct (CCD). Expressed in both alpha-intercalated cells and beta-intercalated cells in the CCD (at protein level).

Its subcellular location is the basolateral cell membrane. The enzyme catalyses 2 hydrogencarbonate(out) + chloride(in) + Na(+)(out) = 2 hydrogencarbonate(in) + chloride(out) + Na(+)(in). It carries out the reaction K(+)(in) + 2 hydrogencarbonate(in) + chloride(out) = K(+)(out) + 2 hydrogencarbonate(out) + chloride(in). The catalysed reaction is Li(+)(in) + 2 hydrogencarbonate(in) + chloride(out) = Li(+)(out) + 2 hydrogencarbonate(out) + chloride(in). It catalyses the reaction Rb(+)(in) + 2 hydrogencarbonate(in) + chloride(out) = Rb(+)(out) + 2 hydrogencarbonate(out) + chloride(in). The enzyme catalyses Cs(+)(in) + 2 hydrogencarbonate(in) + chloride(out) = Cs(+)(out) + 2 hydrogencarbonate(out) + chloride(in). With respect to regulation, 4,4'-diisothiocyanatodihydrostilbene-2,2'- disulfonic acid (H2DIDS) potently inhibits chloride/hydrogencarbonate antiporter activity with 50% inhibition at about 5 uM. Completely inhibits chloride/hydrogencarbonate antiporter activity at 200 uM of 4,4'-diisothiocyano-trans-stilbene-2,2'-disulfonic acid (DIDS). In terms of biological role, electroneutral Cl(-)/HCO3(-) antiporter that favors chloride ion entry and efflux of hydrogencarbonate and sodium ion across the basolateral membrane and may participate in salivary secretion. Also mediates Cl(-)/HCO3(-) exchange activity in the presence of K(+) as well as Cs(+), Li(+), and Rb(+). Does not contribute to Cl(-)/HCO3(-) exchanger in the apical membrane of the upper villous epithelium. This Rattus norvegicus (Rat) protein is Anion exchange protein 4.